Reading from the N-terminus, the 539-residue chain is Chaperonin GroEL (539 aa).

ATP is bound by residues 29–32 (TIGP), 86–90 (DGTTT), Gly413, 476–478 (NAA), and Asp492.

This sequence belongs to the chaperonin (HSP60) family. In terms of assembly, forms a cylinder of 14 subunits composed of two heptameric rings stacked back-to-back. Interacts with the co-chaperonin GroES.

Its subcellular location is the cytoplasm. It carries out the reaction ATP + H2O + a folded polypeptide = ADP + phosphate + an unfolded polypeptide.. Functionally, together with its co-chaperonin GroES, plays an essential role in assisting protein folding. The GroEL-GroES system forms a nano-cage that allows encapsulation of the non-native substrate proteins and provides a physical environment optimized to promote and accelerate protein folding. This is Chaperonin GroEL from Pediococcus pentosaceus (strain ATCC 25745 / CCUG 21536 / LMG 10740 / 183-1w).